The following is a 62-amino-acid chain: Photosystem II reaction center protein Z (62 aa).

Helical transmembrane passes span 8-28 and 41-61; these read LVFI…VTFA and YTGA…NSFI.

It belongs to the PsbZ family. PSII is composed of 1 copy each of membrane proteins PsbA, PsbB, PsbC, PsbD, PsbE, PsbF, PsbH, PsbI, PsbJ, PsbK, PsbL, PsbM, PsbT, sbX, PsbY, PsbZ, Psb30/Ycf12, at least 3 peripheral proteins of the oxygen-evolving complex and a large number of cofactors. It forms dimeric complexes.

Its subcellular location is the plastid. It localises to the chloroplast thylakoid membrane. Its function is as follows. May control the interaction of photosystem II (PSII) cores with the light-harvesting antenna, regulates electron flow through the 2 photosystem reaction centers. PSII is a light-driven water plastoquinone oxidoreductase, using light energy to abstract electrons from H(2)O, generating a proton gradient subsequently used for ATP formation. This Gracilaria tenuistipitata var. liui (Red alga) protein is Photosystem II reaction center protein Z.